Reading from the N-terminus, the 883-residue chain is Phosphoenolpyruvate carboxylase (883 aa).

Residues His-138 and Lys-546 contribute to the active site.

Belongs to the PEPCase type 1 family. Mg(2+) is required as a cofactor.

The catalysed reaction is oxaloacetate + phosphate = phosphoenolpyruvate + hydrogencarbonate. Its function is as follows. Forms oxaloacetate, a four-carbon dicarboxylic acid source for the tricarboxylic acid cycle. This Salmonella arizonae (strain ATCC BAA-731 / CDC346-86 / RSK2980) protein is Phosphoenolpyruvate carboxylase.